The sequence spans 272 residues: Short-chain dehydrogenase srdC (272 aa).

NADP(+) is bound by residues isoleucine 15, aspartate 65, arginine 127, tyrosine 173, lysine 177, valine 206, and threonine 208. Tyrosine 173 serves as the catalytic Proton donor. Catalysis depends on lysine 177, which acts as the Lowers pKa of active site Tyr.

This sequence belongs to the short-chain dehydrogenases/reductases (SDR) family.

Its function is as follows. Short-chain dehydrogenase; part of the gene cluster that mediates the biosynthesis of sordarial, a salicylic aldehyde structurally related to the phytotoxin pyriculol. The most interesting aspect of this pathway is formation of an aromatic product from the highly reducing polyketide synthase srdA. SrdA synthesizes a reduced polyketide chain from one molecule of acetyl-CoA and five molecules of malonyl-CoA. The polyketide chain is then reductively released as an aldehyde. The oxidoreductases srdC, srdD and srdE then oxidize one of the hydroxy groups to facilitate the intramolecular aldol condensation, followed by dehydration to yield a salicylic aldehyde. This aldehyde can undergo facile reduction by endogenous reductases to yield the alcohol 1-hydroxy-2-hydroxymethyl-3-pent-1,3-dienylbenzene. The flavin-dependent srdI counteract against the propensity of the aldehydes to be reduced under physiological conditions and is responsible for reoxidizing 1-hydroxy-2-hydroxymethyl-3-pent-1,3-dienylbenzene back to the salicylic aldehyde. This salicylic aldehyde is then selectively epoxidized by the cupin-domain-containing oxidoreductase srdB to yield the epoxide, which can be hydrolyzed stereoselectively by the hydrolase srdG to give the final product sordarial. This Neurospora crassa (strain ATCC 24698 / 74-OR23-1A / CBS 708.71 / DSM 1257 / FGSC 987) protein is Short-chain dehydrogenase srdC.